Reading from the N-terminus, the 336-residue chain is Holliday junction branch migration complex subunit RuvB (336 aa).

Residues 1–183 (MATERLVAGN…FGINSRLEFY (183 aa)) are large ATPase domain (RuvB-L). Residues Leu22, Arg23, Gly64, Lys67, Thr68, Thr69, 130 to 132 (EDF), Arg173, Tyr183, and Arg220 each bind ATP. A Mg(2+)-binding site is contributed by Thr68. The interval 184 to 254 (QVAELEEIIR…VAREALELLQ (71 aa)) is small ATPAse domain (RuvB-S). The tract at residues 257 to 336 (AAGLDSSDRR…LGIKPEDRLF (80 aa)) is head domain (RuvB-H). The DNA site is built by Arg312 and Arg317.

This sequence belongs to the RuvB family. Homohexamer. Forms an RuvA(8)-RuvB(12)-Holliday junction (HJ) complex. HJ DNA is sandwiched between 2 RuvA tetramers; dsDNA enters through RuvA and exits via RuvB. An RuvB hexamer assembles on each DNA strand where it exits the tetramer. Each RuvB hexamer is contacted by two RuvA subunits (via domain III) on 2 adjacent RuvB subunits; this complex drives branch migration. In the full resolvosome a probable DNA-RuvA(4)-RuvB(12)-RuvC(2) complex forms which resolves the HJ.

It localises to the cytoplasm. The catalysed reaction is ATP + H2O = ADP + phosphate + H(+). Its function is as follows. The RuvA-RuvB-RuvC complex processes Holliday junction (HJ) DNA during genetic recombination and DNA repair, while the RuvA-RuvB complex plays an important role in the rescue of blocked DNA replication forks via replication fork reversal (RFR). RuvA specifically binds to HJ cruciform DNA, conferring on it an open structure. The RuvB hexamer acts as an ATP-dependent pump, pulling dsDNA into and through the RuvAB complex. RuvB forms 2 homohexamers on either side of HJ DNA bound by 1 or 2 RuvA tetramers; 4 subunits per hexamer contact DNA at a time. Coordinated motions by a converter formed by DNA-disengaged RuvB subunits stimulates ATP hydrolysis and nucleotide exchange. Immobilization of the converter enables RuvB to convert the ATP-contained energy into a lever motion, pulling 2 nucleotides of DNA out of the RuvA tetramer per ATP hydrolyzed, thus driving DNA branch migration. The RuvB motors rotate together with the DNA substrate, which together with the progressing nucleotide cycle form the mechanistic basis for DNA recombination by continuous HJ branch migration. Branch migration allows RuvC to scan DNA until it finds its consensus sequence, where it cleaves and resolves cruciform DNA. The chain is Holliday junction branch migration complex subunit RuvB from Moorella thermoacetica (strain ATCC 39073 / JCM 9320).